Consider the following 90-residue polypeptide: Small ribosomal subunit protein bS16 (90 aa).

Belongs to the bacterial ribosomal protein bS16 family.

This chain is Small ribosomal subunit protein bS16, found in Streptococcus pneumoniae serotype 19F (strain G54).